We begin with the raw amino-acid sequence, 98 residues long: PqqA binding protein (98 aa).

It belongs to the PqqD family. As to quaternary structure, monomer. Interacts with PqqE.

It participates in cofactor biosynthesis; pyrroloquinoline quinone biosynthesis. Functionally, functions as a PqqA binding protein and presents PqqA to PqqE, in the pyrroloquinoline quinone (PQQ) biosynthetic pathway. This Pseudomonas syringae pv. tomato (strain ATCC BAA-871 / DC3000) protein is PqqA binding protein.